The chain runs to 625 residues: Complex I assembly factor ACAD9, mitochondrial (625 aa).

A mitochondrion-targeting transit peptide spans 1–41 (MSGYVLFSRGATAAAAAARASRVLRVFTERRRTLHTSLQSC). An N6-acetyllysine modification is found at Lys45. Lys96 is modified (N6-succinyllysine). Catalysis depends on Glu430, which acts as the Proton acceptor. Position 482 is a phosphothreonine (Thr482). Lys525 carries the N6-acetyllysine; alternate modification. Lys525 bears the N6-succinyllysine; alternate mark.

Belongs to the acyl-CoA dehydrogenase family. As to quaternary structure, homodimer. Interacts with NDUFAF1 and ECSIT. Part of the mitochondrial complex I assembly/MCIA complex that comprises at least the core subunits TMEM126B, NDUFAF1, ECSIT and ACAD9 and complement subunits such as COA1 and TMEM186. Interacts with TMEM70 and TMEM242. The cofactor is FAD.

It is found in the mitochondrion inner membrane. It carries out the reaction eicosanoyl-CoA + oxidized [electron-transfer flavoprotein] + H(+) = (2E)-eicosenoyl-CoA + reduced [electron-transfer flavoprotein]. The enzyme catalyses octadecanoyl-CoA + oxidized [electron-transfer flavoprotein] + H(+) = (2E)-octadecenoyl-CoA + reduced [electron-transfer flavoprotein]. The catalysed reaction is oxidized [electron-transfer flavoprotein] + hexadecanoyl-CoA + H(+) = (2E)-hexadecenoyl-CoA + reduced [electron-transfer flavoprotein]. It catalyses the reaction decanoyl-CoA + oxidized [electron-transfer flavoprotein] + H(+) = (2E)-decenoyl-CoA + reduced [electron-transfer flavoprotein]. It carries out the reaction nonanoyl-CoA + oxidized [electron-transfer flavoprotein] + H(+) = (2E)-nonenoyl-CoA + reduced [electron-transfer flavoprotein]. The enzyme catalyses pentadecanoyl-CoA + oxidized [electron-transfer flavoprotein] + H(+) = (2E)-pentadecenoyl-CoA + reduced [electron-transfer flavoprotein]. The catalysed reaction is undecanoyl-CoA + oxidized [electron-transfer flavoprotein] + H(+) = trans-2-undecenoyl-CoA + reduced [electron-transfer flavoprotein]. It catalyses the reaction (9Z)-hexadecenoyl-CoA + oxidized [electron-transfer flavoprotein] + H(+) = (2E,9Z)-hexadecadienoyl-CoA + reduced [electron-transfer flavoprotein]. It carries out the reaction heptadecanoyl-CoA + oxidized [electron-transfer flavoprotein] + H(+) = trans-2-heptadecenoyl-CoA + reduced [electron-transfer flavoprotein]. The enzyme catalyses (9E)-octadecenoyl-CoA + oxidized [electron-transfer flavoprotein] + H(+) = (2E,9E)-octadecadienoyl-CoA + reduced [electron-transfer flavoprotein]. The catalysed reaction is oxidized [electron-transfer flavoprotein] + (9Z)-octadecenoyl-CoA + H(+) = (2E,9Z)-octadecadienoyl-CoA + reduced [electron-transfer flavoprotein]. It catalyses the reaction (9Z,12Z)-octadecadienoyl-CoA + oxidized [electron-transfer flavoprotein] + H(+) = (2E,9Z,12Z)-octadecatrienoyl-CoA + reduced [electron-transfer flavoprotein]. It carries out the reaction (4Z,7Z,10Z,13Z,16Z,19Z)-docosahexaenoyl-CoA + oxidized [electron-transfer flavoprotein] + H(+) = (2E,4Z,7Z,10Z,13Z,16Z,19Z)-docosaheptaenoyl-CoA + reduced [electron-transfer flavoprotein]. The enzyme catalyses tetradecanoyl-CoA + oxidized [electron-transfer flavoprotein] + H(+) = (2E)-tetradecenoyl-CoA + reduced [electron-transfer flavoprotein]. In terms of biological role, as part of the MCIA complex, primarily participates in the assembly of the mitochondrial complex I and therefore plays a role in oxidative phosphorylation. This moonlighting protein also has a dehydrogenase activity toward a broad range of substrates with greater specificity for long-chain unsaturated acyl-CoAs. However, in vivo, it does not seem to play a primary role in fatty acid oxidation. In addition, the function in complex I assembly is independent of the dehydrogenase activity of the protein. The chain is Complex I assembly factor ACAD9, mitochondrial from Rattus norvegicus (Rat).